A 331-amino-acid polypeptide reads, in one-letter code: Beta-ketoacyl-[acyl-carrier-protein] synthase III (331 aa).

Residues Cys116 and His256 contribute to the active site. Residues 257 to 261 (QANTR) are ACP-binding. Asn286 is an active-site residue.

This sequence belongs to the thiolase-like superfamily. FabH family. Homodimer.

Its subcellular location is the cytoplasm. The enzyme catalyses malonyl-[ACP] + acetyl-CoA + H(+) = 3-oxobutanoyl-[ACP] + CO2 + CoA. Its pathway is lipid metabolism; fatty acid biosynthesis. In terms of biological role, catalyzes the condensation reaction of fatty acid synthesis by the addition to an acyl acceptor of two carbons from malonyl-ACP. Catalyzes the first condensation reaction which initiates fatty acid synthesis and may therefore play a role in governing the total rate of fatty acid production. Possesses both acetoacetyl-ACP synthase and acetyl transacylase activities. Its substrate specificity determines the biosynthesis of branched-chain and/or straight-chain of fatty acids. This Caldanaerobacter subterraneus subsp. tengcongensis (strain DSM 15242 / JCM 11007 / NBRC 100824 / MB4) (Thermoanaerobacter tengcongensis) protein is Beta-ketoacyl-[acyl-carrier-protein] synthase III.